The sequence spans 499 residues: Ubiquitin carboxyl-terminal hydrolase 16 (499 aa).

The USP domain occupies 53–497 (VGLINRGNDC…YAYMLYYERV (445 aa)). The active-site Nucleophile is Cys-62. His-407 functions as the Proton acceptor in the catalytic mechanism.

The protein belongs to the peptidase C19 family.

It carries out the reaction Thiol-dependent hydrolysis of ester, thioester, amide, peptide and isopeptide bonds formed by the C-terminal Gly of ubiquitin (a 76-residue protein attached to proteins as an intracellular targeting signal).. This chain is Ubiquitin carboxyl-terminal hydrolase 16 (UBP16), found in Saccharomyces cerevisiae (strain ATCC 204508 / S288c) (Baker's yeast).